Consider the following 726-residue polypeptide: MELGKGKLLRSGLNALYQAIHPVHGLAWTDGRQVVLTALHHNNEEPKFGNSIVVGQFEHVHGLYWGPFLGNDTPALLAVQHKKHVTVWQLCYSSLDKNKLVVSQTCEIGDPFPVLPQGCTWHPSKDILVVLTKRDVSVLYAVRYENTSIKADVKSSGLIHCACWTKDGSRLVVAIGSALHSYIWDSKQKSLNACAFCPVFDIGGYICAIESTVDSQVAVSTELPLDRICALNAGIAFDVPASSEITISSQPGLLLMEEEFSMDVVQKSADSGSLTTDSLATSPATLDLTHIVNHSKADLNSLLNMKKKDYLTGSGQDSSHLILVNFEKKVTTTRRVSIPGILVPDILAFDPTAHIVAVASNTCSAVLVYSLTSSSVPNIQQILLEKNERPKGLCFLTDKMLLVLVGRQKTSDPAFLPSSSSDKYLIRLMVKEVMFDEDSSASSGGNTSVQASFDSSMSIQDKKKLVESLYKEGQSAHREILLPGGVAPPTYLRKKKLIEEIRSYDGDQSPTSSANEFDDKRSKLRVESLDTEPKNRSITLGLDMDKKPNSRPTSPKSECQKSSPPNFIKHGEMSPQQEILSISRNVERLCCNFAHLQQHLSELTDITRNGKRPLSASYLPCRQAPYVTVVCQDAYHPEGPAMKRSILLCDNKLRLGTIQELFGLSLIEMQLGPSLWIILTGDSEGFIPLTFLANQEITIRDARISTTHPPLSMDRNNSLQPSSSVT.

WD repeat units follow at residues 55–98 and 154–194; these read GQFE…LDKN and KSSG…LNAC. A disordered region spans residues 503–571; that stretch reads SYDGDQSPTS…SSPPNFIKHG (69 aa). Positions 506 to 515 are enriched in polar residues; the sequence is GDQSPTSSAN. Over residues 517 to 535 the composition is skewed to basic and acidic residues; the sequence is FDDKRSKLRVESLDTEPKN. Polar residues predominate over residues 550-565; it reads SRPTSPKSECQKSSPP. Residues 581–609 are a coiled coil; that stretch reads SISRNVERLCCNFAHLQQHLSELTDITRN.

The sequence is that of WD repeat and coiled-coil-containing protein (wdcp) from Xenopus tropicalis (Western clawed frog).